The primary structure comprises 85 residues: Large ribosomal subunit protein bL31B (85 aa).

Belongs to the bacterial ribosomal protein bL31 family. Type B subfamily. As to quaternary structure, part of the 50S ribosomal subunit.

The protein is Large ribosomal subunit protein bL31B of Porphyromonas gingivalis (strain ATCC 33277 / DSM 20709 / CIP 103683 / JCM 12257 / NCTC 11834 / 2561).